The following is a 130-amino-acid chain: Small ribosomal subunit protein uS12c (130 aa).

The protein belongs to the universal ribosomal protein uS12 family. As to quaternary structure, part of the 30S ribosomal subunit.

Its subcellular location is the plastid. The protein localises to the chloroplast. Its function is as follows. With S4 and S5 plays an important role in translational accuracy. Located at the interface of the 30S and 50S subunits. The protein is Small ribosomal subunit protein uS12c (rps12) of Tetradesmus obliquus (Green alga).